The following is a 189-amino-acid chain: dCTP deaminase (189 aa).

DCTP contacts are provided by residues 112–117 (KSTYAR), 136–138 (TLE), Gln157, Tyr171, and Gln181. Glu138 (proton donor/acceptor) is an active-site residue.

The protein belongs to the dCTP deaminase family. Homotrimer.

The enzyme catalyses dCTP + H2O + H(+) = dUTP + NH4(+). It functions in the pathway pyrimidine metabolism; dUMP biosynthesis; dUMP from dCTP (dUTP route): step 1/2. Catalyzes the deamination of dCTP to dUTP. The protein is dCTP deaminase of Albidiferax ferrireducens (strain ATCC BAA-621 / DSM 15236 / T118) (Rhodoferax ferrireducens).